The following is a 135-amino-acid chain: MSLIQEFKAFAARGNVIDMAVGIIIGAAFGKIVSSFVGDVIMPPIGLILGGVDFSDLAVTLKAAEGATPAVVIAYGKFIQTIIDFLIISFAIFMGLKAINTLKKKQEEAAAPAGPTKDQELLSEIRDLLKSQQGK.

A run of 2 helical transmembrane segments spans residues 9-29 (AFAA…GAAF) and 79-99 (IQTI…LKAI).

This sequence belongs to the MscL family. As to quaternary structure, homopentamer.

The protein resides in the cell inner membrane. Functionally, channel that opens in response to stretch forces in the membrane lipid bilayer. May participate in the regulation of osmotic pressure changes within the cell. The polypeptide is Large-conductance mechanosensitive channel (Aeromonas salmonicida (strain A449)).